The sequence spans 388 residues: P2X receptor E (388 aa).

Over 1 to 28 (MNFRNIDWDSLFSYSTIKIVRIRDKRLG) the chain is Cytoplasmic. The chain crosses the membrane as a helical span at residues 29–49 (ILHFAFLIGIILYIIVGTIFL). At 50–312 (QKKYLVLESP…QLGQFDFQTM (263 aa)) the chain is on the lumenal side. A pore-forming motif region spans residues 291-304 (RHGVRIIFIQTGQL). A helical membrane pass occupies residues 313–333 (LLTFVSGIGLVTAASLIVDII). Residues 334–388 (ATRIMPQRSRYQELKFQDSSINNTQKTPTNDHTPLLKDNEDTINENSYQNNSYEK) lie on the Cytoplasmic side of the membrane. Positions 349–388 (FQDSSINNTQKTPTNDHTPLLKDNEDTINENSYQNNSYEK) are disordered. 2 stretches are compositionally biased toward polar residues: residues 350 to 365 (QDSS…TNDH) and 377 to 388 (NENSYQNNSYEK).

It belongs to the P2X receptor family.

The protein localises to the contractile vacuole membrane. In terms of biological role, P2X receptors are ATP-gated ion channels that play a role in intracellular calcium signaling. Not required for the purinergic response to extracellular nucleotides. Not essential for osmoregulation. Inward currents evoked by intracellular ATP. ATP analog beta, gamma-imido-ATP is a weak partial agonist of p2xE. Exclusively selective for ATP over other nucleotides. Insensitive to copper and P2 receptor antagonists PPADS and suramin but strongly inhibited by sodium ions. More permeable to ammonium than either sodium or potassium ions and less permeable to choline. Permeable to calcium ions, but not chloride. This Dictyostelium discoideum (Social amoeba) protein is P2X receptor E (p2xE).